A 256-amino-acid chain; its full sequence is Adenylate kinase (256 aa).

49–54 serves as a coordination point for ATP; that stretch reads GAGKGT. Positions 69–98 are NMP; it reads ATGDMLRDQVEKKTPLGIAAKKIMDAGGLV. Residues T70, R75, 96 to 98, 125 to 128, and Q132 contribute to the AMP site; these read GLV and GFPR. Residues 166 to 203 form an LID region; sequence GRLIHPASGRSYHKIFNPPKKAGIDDLTGEPLIQRSDD. ATP is bound by residues R167 and 176–177; that span reads SY. AMP is bound by residues R200 and R211. Q239 serves as a coordination point for ATP.

The protein belongs to the adenylate kinase family. AK2 subfamily. Monomer.

Its subcellular location is the cytoplasm. The protein resides in the cytosol. The protein localises to the mitochondrion intermembrane space. The catalysed reaction is AMP + ATP = 2 ADP. Catalyzes the reversible transfer of the terminal phosphate group between ATP and AMP. Plays an important role in cellular energy homeostasis and in adenine nucleotide metabolism. Adenylate kinase activity is critical for regulation of the phosphate utilization and the AMP de novo biosynthesis pathways. The polypeptide is Adenylate kinase (Coprinopsis cinerea (strain Okayama-7 / 130 / ATCC MYA-4618 / FGSC 9003) (Inky cap fungus)).